Reading from the N-terminus, the 494-residue chain is Cytochrome P450 2G1 (494 aa).

Heme is bound at residue C439.

The protein belongs to the cytochrome P450 family. The cofactor is heme. As to expression, olfactory epithelium.

The protein resides in the endoplasmic reticulum membrane. Its subcellular location is the microsome membrane. The catalysed reaction is an organic molecule + reduced [NADPH--hemoprotein reductase] + O2 = an alcohol + oxidized [NADPH--hemoprotein reductase] + H2O + H(+). In terms of biological role, cytochromes P450 are a group of heme-thiolate monooxygenases. This isozyme seems to be implicated in olfaction. The sequence is that of Cytochrome P450 2G1 (Cyp2g1) from Rattus norvegicus (Rat).